The chain runs to 619 residues: Chaperone protein HscA homolog (619 aa).

Belongs to the heat shock protein 70 family.

Its function is as follows. Chaperone involved in the maturation of iron-sulfur cluster-containing proteins. Has a low intrinsic ATPase activity which is markedly stimulated by HscB. The chain is Chaperone protein HscA homolog from Haemophilus influenzae (strain 86-028NP).